A 153-amino-acid chain; its full sequence is ORM1-like protein 3 (153 aa).

Residues 1–17 are important for ceramide level-sensing; that stretch reads MNVGTAHSEVNPNTRVM. At 1–21 the chain is on the cytoplasmic side; it reads MNVGTAHSEVNPNTRVMNSRG. A run of 2 helical transmembrane segments spans residues 22–42 and 43–63; these read IWLS…SIPF and VSVP…MYIF. The Cytoplasmic segment spans residues 64-94; the sequence is LHTVKGTPFETPDQGKARLLTHWEQMDYGVQ. The chain crosses the membrane as a helical span at residues 95–117; the sequence is FTASRKFLTITPIVLYFLTSFYT. Residues 118–121 lie on the Extracellular side of the membrane; the sequence is KYDQ. The chain crosses the membrane as a helical span at residues 122–142; sequence IHFVLNTVSLMSVLIPKLPQL. Hydroxyproline is present on Pro-137. Topologically, residues 143 to 153 are cytoplasmic; it reads HGVRIFGINKY.

Belongs to the ORM family. As to quaternary structure, ceramide-sensitive subunit of the serine palmitoyltransferase (SPT) complex, which is also composed of SPTLC1, SPTLC2/3 and SPTSSA/B. Post-translationally, when hydroxylated at Pro-137, ubiquitinated via 'Lys-48'-linkage, leading to proteasomal degradation. In endothelial cells, ORMDL3 proteasomal degradation is controlled by the sphingosine 1-phosphate receptor signaling pathway.

Its subcellular location is the endoplasmic reticulum membrane. Functionally, plays an essential role in the homeostatic regulation of sphingolipid de novo biosynthesis by modulating the activity of the serine palmitoyltransferase (SPT) in response to ceramide levels. When complexed to SPT, the binding of ceramides to its N-terminus stabilizes a conformation that block SPT substrate entry, hence preventing SPT catalytic activity. Through this mechanism, maintains ceramide levels at sufficient concentrations for the production of complex sphingolipids, but which prevents the accumulation of ceramides to levels that trigger apoptosis. The protein is ORM1-like protein 3 (ORMDL3) of Ailuropoda melanoleuca (Giant panda).